The chain runs to 348 residues: UDP-N-acetylglucosamine--N-acetylmuramyl-(pentapeptide) pyrophosphoryl-undecaprenol N-acetylglucosamine transferase (348 aa).

Residues 11 to 13 (TGG), N120, R161, S187, and Q281 contribute to the UDP-N-acetyl-alpha-D-glucosamine site.

It belongs to the glycosyltransferase 28 family. MurG subfamily.

It is found in the cell inner membrane. It carries out the reaction di-trans,octa-cis-undecaprenyl diphospho-N-acetyl-alpha-D-muramoyl-L-alanyl-D-glutamyl-meso-2,6-diaminopimeloyl-D-alanyl-D-alanine + UDP-N-acetyl-alpha-D-glucosamine = di-trans,octa-cis-undecaprenyl diphospho-[N-acetyl-alpha-D-glucosaminyl-(1-&gt;4)]-N-acetyl-alpha-D-muramoyl-L-alanyl-D-glutamyl-meso-2,6-diaminopimeloyl-D-alanyl-D-alanine + UDP + H(+). The protein operates within cell wall biogenesis; peptidoglycan biosynthesis. Its function is as follows. Cell wall formation. Catalyzes the transfer of a GlcNAc subunit on undecaprenyl-pyrophosphoryl-MurNAc-pentapeptide (lipid intermediate I) to form undecaprenyl-pyrophosphoryl-MurNAc-(pentapeptide)GlcNAc (lipid intermediate II). This Crocosphaera subtropica (strain ATCC 51142 / BH68) (Cyanothece sp. (strain ATCC 51142)) protein is UDP-N-acetylglucosamine--N-acetylmuramyl-(pentapeptide) pyrophosphoryl-undecaprenol N-acetylglucosamine transferase.